The chain runs to 284 residues: Putative L-ribulose-5-phosphate 3-epimerase UlaE (284 aa).

Belongs to the L-ribulose-5-phosphate 3-epimerase family.

It carries out the reaction L-ribulose 5-phosphate = L-xylulose 5-phosphate. It participates in cofactor degradation; L-ascorbate degradation; D-xylulose 5-phosphate from L-ascorbate: step 3/4. Its function is as follows. Catalyzes the isomerization of L-xylulose-5-phosphate to L-ribulose-5-phosphate. Is involved in the anaerobic L-ascorbate utilization. This is Putative L-ribulose-5-phosphate 3-epimerase UlaE from Shigella dysenteriae serotype 1 (strain Sd197).